A 560-amino-acid polypeptide reads, in one-letter code: Probable methionine--tRNA ligase, cytoplasmic (560 aa).

The short motif at 16–26 (PYVNNQPHLGN) is the 'HIGH' region element. Positions 347–351 (KFSKS) match the 'KMSKS' region motif. Lysine 350 contacts ATP.

The protein belongs to the class-I aminoacyl-tRNA synthetase family.

The protein localises to the cytoplasm. The catalysed reaction is tRNA(Met) + L-methionine + ATP = L-methionyl-tRNA(Met) + AMP + diphosphate. In Vairimorpha ceranae (strain BRL01) (Microsporidian parasite), this protein is Probable methionine--tRNA ligase, cytoplasmic.